The primary structure comprises 801 residues: MAGLSTPHQFDHPTALAAAVLTDDNRVIVMVIGVVALAALVVAGILVRQVLAAGEGTDSMKKIAAAVQEGANAYLGRQMRTLGVFAVVVFFLLMLLPADDWNQRAGRSVFFLIGALFSATTGYTGMWLAVRSNVRVAAAAREATPAEGEPEKDLTAVSHKAMKIAFRTGGVVGMFTVGLGLLGASCVVLVYAADAPKVLEGFGLGAALIAMFMRVGGGIFTKAADVGADLVGKVEQGIPEDDPRNAATIADNVGDNVGDCAGMAADLFESYAVTLVAALILGKAAFGDSGLAFPLIVPAIGVLTAMIGIFAVAPRRADRSGMSAINRGFFVSAVFSLALVAVAVYVYLPGKYADLDGVTDVAIRAKDGDPRILAMVAVAIGIVLAALIQQLTGYFTETTRRPVRDIGKSSLTGAATVVLAGISVGLESAVYTALLIGLGVYGAFLLGGTSIMLALFAVALAGTGLLTTVGVIVAMDTFGPVSDNAQGIAEMSGDVTGAGAQVLTDLDAVGNTTKAITKGIAIATAVLAASALFGSYRDAITTAANDVGEKVSGAGAPMNLMMDISQPNNLVGLIAGAAVVFLFSGLAINAVSRSAGAVVYEVRRQFREHPGIMDYTEQPEYGRVVDICTKDALRELATPGLLAVLAPIAIGFTLGVGALGAYLAGAIGTGTLMAVFLANSGGAWDNAKKLVEDGHHGGKGSEAHAATVIGDTVGDPFKDTAGPAINPLLKVMNLVALLIAPAVVKFSYGEDKNLGVRIAIAVLSILVIVGAVYISKRRGIAVGDEGNAERVTKSADPAVVS.

The next 5 helical transmembrane spans lie at 27–47, 81–101, 109–129, 170–190, and 201–221; these read VIVM…GILV, TLGV…ADDW, VFFL…MWLA, GVVG…VVLV, and GFGL…GIFT. Lysine 222 provides a ligand contact to substrate. Positions 225, 229, 252, and 255 each coordinate Mg(2+). 7 helical membrane-spanning segments follow: residues 261–281, 292–312, 328–348, 372–392, 406–426, 429–449, and 453–473; these read AGMA…ALIL, AFPL…IFAV, GFFV…YVYL, ILAM…QQLT, IGKS…SVGL, AVYT…LGGT, and LALF…GVIV. Aspartate 483 is a binding site for Mg(2+). Helical transmembrane passes span 515-535, 571-591, 641-661, and 663-683; these read AITK…LFGS, VGLI…INAV, LLAV…ALGA, and LAGA…SGGA. Ca(2+)-binding residues include aspartate 685, aspartate 711, and aspartate 715. Lysine 718 contacts substrate. A run of 2 helical transmembrane segments spans residues 724–744 and 754–774; these read AINP…PAVV and LGVR…AVYI.

Belongs to the H(+)-translocating pyrophosphatase (TC 3.A.10) family. K(+)-insensitive subfamily. In terms of assembly, homodimer. The cofactor is Mg(2+).

The protein localises to the cell membrane. It catalyses the reaction diphosphate + H2O + H(+)(in) = 2 phosphate + 2 H(+)(out). Functionally, proton pump that utilizes the energy of pyrophosphate hydrolysis as the driving force for proton movement across the membrane. Generates a proton motive force. The protein is K(+)-insensitive pyrophosphate-energized proton pump of Streptomyces avermitilis (strain ATCC 31267 / DSM 46492 / JCM 5070 / NBRC 14893 / NCIMB 12804 / NRRL 8165 / MA-4680).